Consider the following 780-residue polypeptide: ATP-dependent 6-phosphofructokinase, liver type (780 aa).

Alanine 2 is modified (N-acetylalanine). Residues 2-390 form an N-terminal catalytic PFK domain 1 region; sequence AAVDLEKLRA…NWNIYKLLAH (389 aa). ATP-binding positions include glycine 25, 88-89, and 118-121; these read RC and GDGS. Aspartate 119 is a binding site for Mg(2+). Substrate-binding positions include 164–166, arginine 201, 208–210, glutamate 264, arginine 292, and 298–301; these read SID, MGR, and HVQR. Aspartate 166 serves as the catalytic Proton acceptor. At serine 377 the chain carries Phosphoserine. Positions 391–400 are interdomain linker; it reads QKPPKEKSNF. A C-terminal regulatory PFK domain 2 region spans residues 401–780; it reads SLAILNVGAP…RRTLSMDKGF (380 aa). Beta-D-fructose 2,6-bisphosphate is bound by residues arginine 470, 527 to 531, arginine 565, 572 to 574, and glutamate 628; these read TISNN and MGG. An O-linked (GlcNAc) serine glycan is attached at serine 529. The residue at position 640 (tyrosine 640) is a Phosphotyrosine. Beta-D-fructose 2,6-bisphosphate-binding positions include arginine 654, 660–663, and arginine 734; that span reads HLQQ. Serine 775 is modified (phosphoserine).

Belongs to the phosphofructokinase type A (PFKA) family. ATP-dependent PFK group I subfamily. Eukaryotic two domain clade 'E' sub-subfamily. In terms of assembly, homo- and heterotetramers. Phosphofructokinase (PFK) enzyme functions as a tetramer composed of different combinations of 3 types of subunits, called PFKM (where M stands for Muscle), PFKL (Liver) and PFKP (Platelet). The composition of the PFK tetramer differs according to the tissue type it is present in. In muscles, it is composed of 4 PFKM subunits (also called M4). In the liver, the predominant form is a tetramer of PFKL subunits (L4). In erythrocytes, both PFKM and PFKL subunits randomly tetramerize to form M4, L4 and other combinations (ML3, M2L2, M3L). The kinetic and regulatory properties of the tetrameric enzyme are dependent on the subunit composition, hence can vary across tissues. Requires Mg(2+) as cofactor. GlcNAcylation at Ser-529 by OGT decreases enzyme activity, leading to redirect glucose flux through the oxidative pentose phosphate pathway. Glycosylation is stimulated by both hypoxia and glucose deprivation.

The protein localises to the cytoplasm. The catalysed reaction is beta-D-fructose 6-phosphate + ATP = beta-D-fructose 1,6-bisphosphate + ADP + H(+). Its pathway is carbohydrate degradation; glycolysis; D-glyceraldehyde 3-phosphate and glycerone phosphate from D-glucose: step 3/4. Its activity is regulated as follows. Allosterically activated by ADP, AMP, or fructose 2,6-bisphosphate, and allosterically inhibited by ATP or citrate. GlcNAcylation by OGT overcomes allosteric regulation. In terms of biological role, catalyzes the phosphorylation of D-fructose 6-phosphate to fructose 1,6-bisphosphate by ATP, the first committing step of glycolysis. Negatively regulates the phagocyte oxidative burst in response to bacterial infection by controlling cellular NADPH biosynthesis and NADPH oxidase-derived reactive oxygen species. Upon macrophage activation, drives the metabolic switch toward glycolysis, thus preventing glucose turnover that produces NADPH via pentose phosphate pathway. In Homo sapiens (Human), this protein is ATP-dependent 6-phosphofructokinase, liver type.